Reading from the N-terminus, the 333-residue chain is Fatty acid hydroxylase domain-containing protein 2 (333 aa).

6 consecutive transmembrane segments (helical) span residues phenylalanine 29–leucine 49, isoleucine 77–leucine 97, threonine 134–leucine 154, phenylalanine 168–tyrosine 188, valine 215–valine 235, and proline 237–isoleucine 257. Residues alanine 176–threonine 299 form the Fatty acid hydroxylase domain.

The protein belongs to the sterol desaturase family. As to expression, down-regulated in primary acute myeloid leukemia (AML) patients.

It is found in the cytoplasm. The protein resides in the membrane. In terms of biological role, promotes megakaryocyte differentiation by enhancing ERK phosphorylation and up-regulating RUNX1 expression. The polypeptide is Fatty acid hydroxylase domain-containing protein 2 (FAXDC2) (Homo sapiens (Human)).